The following is a 188-amino-acid chain: Elongation factor P (188 aa).

It belongs to the elongation factor P family.

It localises to the cytoplasm. It participates in protein biosynthesis; polypeptide chain elongation. Its function is as follows. Involved in peptide bond synthesis. Stimulates efficient translation and peptide-bond synthesis on native or reconstituted 70S ribosomes in vitro. Probably functions indirectly by altering the affinity of the ribosome for aminoacyl-tRNA, thus increasing their reactivity as acceptors for peptidyl transferase. This Flavobacterium johnsoniae (strain ATCC 17061 / DSM 2064 / JCM 8514 / BCRC 14874 / CCUG 350202 / NBRC 14942 / NCIMB 11054 / UW101) (Cytophaga johnsonae) protein is Elongation factor P.